A 30-amino-acid polypeptide reads, in one-letter code: Nattererin-1 (30 aa).

Expressed by the skin glands.

The protein resides in the secreted. Its function is as follows. Probably has antibacterial activity. This chain is Nattererin-1, found in Physalaemus nattereri (Cuyaba dwarf frog).